Reading from the N-terminus, the 295-residue chain is MPWIQIKLNATNDNAEAIGDMLMEETGAVSVTFLDAKDTPVFEPLPGETRLWGDTDVVALYEADMDTSLILQQIKASNMLAEGFAHKVEQVEDKDWEREWMDNFHPMQFGRRLWICPSWREVPDPQAVNVMLDPGLAFGTGTHPTTALCLEWLDNLDLTGKTVIDFGCGSGILAIAAIKLGAAKVIGIDIDPQALLASKDNAARNGVEDQIEVYLPKDQPEGLVADVVVANILAGPLRELSPTIKGLLKPGGQLAMSGILDTQAESVAEFYRDDLELDPIAEKSEWCRISGRKLG.

The S-adenosyl-L-methionine site is built by T146, G167, D189, and N231.

Belongs to the methyltransferase superfamily. PrmA family.

The protein localises to the cytoplasm. It catalyses the reaction L-lysyl-[protein] + 3 S-adenosyl-L-methionine = N(6),N(6),N(6)-trimethyl-L-lysyl-[protein] + 3 S-adenosyl-L-homocysteine + 3 H(+). Functionally, methylates ribosomal protein L11. The protein is Ribosomal protein L11 methyltransferase of Vibrio cholerae serotype O1 (strain ATCC 39541 / Classical Ogawa 395 / O395).